We begin with the raw amino-acid sequence, 202 residues long: Pycsar effector protein PtPycTM (202 aa).

Transmembrane regions (helical) follow at residues 60–80, 85–105, and 181–201; these read GVVL…AADI, LVIL…AVLA, and ILVG…VALG.

The protein localises to the cell membrane. Functionally, pycsar (pyrimidine cyclase system for antiphage resistance) provides immunity against bacteriophage. The pyrimidine cyclase (PycC) synthesizes cyclic nucleotides in response to infection; these serve as specific second messenger signals. The signals activate the adjacent effector, leading to bacterial cell death and abortive phage infection. A clade D Pycsar system. The effector gene of a two-gene Pycsar system. Expression of this and adjacent uridylate cyclase PtPycC (AC A0A4V2JTK3) probably confers resistance to bacteriophage. The genes are probably only expressed in response to bacteriophage infection. Probably only responds to cUMP (produced by its cognate NTP cyclase), acts by impairing membrane integrity. This is Pycsar effector protein PtPycTM from Propioniciclava tarda.